The chain runs to 157 residues: Probable succinate transporter subunit YjjB (157 aa).

4 helical membrane passes run 8–28 (FALA…AMVF), 50–70 (MILM…SMLV), 87–107 (VFTV…TAMI), and 129–149 (FLTA…PGLW).

This sequence belongs to the ThrE exporter (TC 2.A.79) family. As to quaternary structure, the transporter is composed of YjjB and YjjP.

It is found in the cell inner membrane. In terms of biological role, involved in succinate export with YjjP. Both proteins are required for export. The protein is Probable succinate transporter subunit YjjB of Escherichia coli (strain ATCC 8739 / DSM 1576 / NBRC 3972 / NCIMB 8545 / WDCM 00012 / Crooks).